A 327-amino-acid polypeptide reads, in one-letter code: Phenylalanine--tRNA ligase alpha subunit (327 aa).

Glu-252 is a binding site for Mg(2+).

It belongs to the class-II aminoacyl-tRNA synthetase family. Phe-tRNA synthetase alpha subunit type 1 subfamily. As to quaternary structure, tetramer of two alpha and two beta subunits. It depends on Mg(2+) as a cofactor.

Its subcellular location is the cytoplasm. It catalyses the reaction tRNA(Phe) + L-phenylalanine + ATP = L-phenylalanyl-tRNA(Phe) + AMP + diphosphate + H(+). In Edwardsiella ictaluri (strain 93-146), this protein is Phenylalanine--tRNA ligase alpha subunit.